The chain runs to 126 residues: Fluoride-specific ion channel FluC (126 aa).

A run of 4 helical transmembrane segments spans residues 9 to 29, 35 to 55, 63 to 83, and 94 to 114; these read LAVFAGGAIGSVLRELLGFQL, LTATFGINIAACFLLGWLYAI, LLHLGAVGFCGGLSTFSSFVL, and WSIGLTAMTLEIAAGLAAAIL. 2 residues coordinate Na(+): Gly73 and Ser76.

The protein belongs to the fluoride channel Fluc/FEX (TC 1.A.43) family.

Its subcellular location is the cell inner membrane. The catalysed reaction is fluoride(in) = fluoride(out). Its activity is regulated as follows. Na(+) is not transported, but it plays an essential structural role and its presence is essential for fluoride channel function. Fluoride-specific ion channel. Important for reducing fluoride concentration in the cell, thus reducing its toxicity. The chain is Fluoride-specific ion channel FluC from Ruegeria pomeroyi (strain ATCC 700808 / DSM 15171 / DSS-3) (Silicibacter pomeroyi).